The sequence spans 190 residues: Potassium-transporting ATPase KdpC subunit (190 aa).

A helical membrane pass occupies residues 10–30 (TFIFLLLITGGVYPLLTTALG).

Belongs to the KdpC family. As to quaternary structure, the system is composed of three essential subunits: KdpA, KdpB and KdpC.

The protein resides in the cell inner membrane. Its function is as follows. Part of the high-affinity ATP-driven potassium transport (or Kdp) system, which catalyzes the hydrolysis of ATP coupled with the electrogenic transport of potassium into the cytoplasm. This subunit acts as a catalytic chaperone that increases the ATP-binding affinity of the ATP-hydrolyzing subunit KdpB by the formation of a transient KdpB/KdpC/ATP ternary complex. This is Potassium-transporting ATPase KdpC subunit from Escherichia coli O157:H7.